Consider the following 165-residue polypeptide: PTS system glucose-specific EIIA component (165 aa).

The region spanning 33–137 (DPVFAGRMMG…STITPIVITN (105 aa)) is the PTS EIIA type-1 domain. 2 residues coordinate Zn(2+): H70 and H85. The active-site Tele-phosphohistidine intermediate; for EIIA activity is H85. H85 carries the post-translational modification Phosphohistidine; by HPr.

In terms of assembly, heterodimer with glycerol kinase (glpk). Requires Zn(2+) as cofactor.

Its subcellular location is the cytoplasm. The phosphoenolpyruvate-dependent sugar phosphotransferase system (sugar PTS), a major carbohydrate active transport system, catalyzes the phosphorylation of incoming sugar substrates concomitantly with their translocation across the cell membrane. The enzyme II complex composed of PtsG and Crr is involved in glucose transport. The sequence is that of PTS system glucose-specific EIIA component (crr) from Bacillus anthracis.